The chain runs to 344 residues: Dihydroorotate dehydrogenase (quinone) (344 aa).

FMN contacts are provided by residues 62 to 66 (AGLDK) and T86. K66 is a binding site for substrate. Substrate is bound at residue 111 to 115 (NRMGF). FMN-binding residues include N139 and N172. N172 is a binding site for substrate. The active-site Nucleophile is the S175. Residue N177 coordinates substrate. FMN contacts are provided by K217 and T245. 246-247 (NT) contributes to the substrate binding site. Residues G268, G297, and 318 to 319 (YS) contribute to the FMN site.

Belongs to the dihydroorotate dehydrogenase family. Type 2 subfamily. In terms of assembly, monomer. The cofactor is FMN.

The protein resides in the cell membrane. The enzyme catalyses (S)-dihydroorotate + a quinone = orotate + a quinol. It functions in the pathway pyrimidine metabolism; UMP biosynthesis via de novo pathway; orotate from (S)-dihydroorotate (quinone route): step 1/1. Functionally, catalyzes the conversion of dihydroorotate to orotate with quinone as electron acceptor. The protein is Dihydroorotate dehydrogenase (quinone) of Chromobacterium violaceum (strain ATCC 12472 / DSM 30191 / JCM 1249 / CCUG 213 / NBRC 12614 / NCIMB 9131 / NCTC 9757 / MK).